A 118-amino-acid polypeptide reads, in one-letter code: Vesicle-associated membrane protein 1 (118 aa).

Over residues 1–15 (MSAPAQPPAEGTEGA) the composition is skewed to low complexity. The tract at residues 1 to 36 (MSAPAQPPAEGTEGAAPGGGPPGPPPNMTSNRRLQQ) is disordered. Topologically, residues 1–96 (MSAPAQPPAE…KRKYWWKNCK (96 aa)) are cytoplasmic. Residues 33-93 (RLQQTQAQVE…AKLKRKYWWK (61 aa)) enclose the v-SNARE coiled-coil homology domain. Phosphoserine is present on serine 63. A helical; Anchor for type IV membrane protein transmembrane segment spans residues 97–116 (MMIMLGAICAIIVVVIVIYF). The Vesicular segment spans residues 117–118 (FT).

Belongs to the synaptobrevin family. As to quaternary structure, interacts with VAPA and VAPB. In terms of processing, (Microbial infection) Targeted and hydrolyzed by C.botulinum neurotoxin type X (BoNT/X) which hydrolyzes the 68-Arg-|-Ala-69 bond and probably inhibits neurotransmitter release. It remains unknown whether BoNT/X is ever produced, or what organisms it targets. As to expression, highly expressed in the zona incerta and rostral periolivary region of the brain. Other neuroanatomical regions show negligible expression. Expressed in the retina, expression observed in the outer segments of the photoreceptors, in the outer and inner plexiform layers, and in a subset of ganglion cells.

The protein resides in the cytoplasmic vesicle. Its subcellular location is the secretory vesicle. It is found in the synaptic vesicle membrane. It localises to the synapse. The protein localises to the synaptosome. The protein resides in the cytoplasmic vesicle membrane. Functionally, involved in the targeting and/or fusion of transport vesicles to their target membrane. The protein is Vesicle-associated membrane protein 1 (Vamp1) of Mus musculus (Mouse).